Reading from the N-terminus, the 89-residue chain is Small ribosomal subunit protein uS17 (89 aa).

The protein belongs to the universal ribosomal protein uS17 family. As to quaternary structure, part of the 30S ribosomal subunit.

One of the primary rRNA binding proteins, it binds specifically to the 5'-end of 16S ribosomal RNA. The chain is Small ribosomal subunit protein uS17 from Chlorobaculum tepidum (strain ATCC 49652 / DSM 12025 / NBRC 103806 / TLS) (Chlorobium tepidum).